Consider the following 231-residue polypeptide: Cuticle protein LPCP-23 (231 aa).

An N-terminal signal peptide occupies residues 1-17; it reads MAFKFVVFAAALAYANA. 2 tandem repeats follow at residues 130–133 and 199–202.

In terms of biological role, component of the cuticle of Tenebrio molitor. The chain is Cuticle protein LPCP-23 (LPCP-23) from Tenebrio molitor (Yellow mealworm beetle).